Here is a 441-residue protein sequence, read N- to C-terminus: 23S rRNA (uracil(1939)-C(5))-methyltransferase RlmD (441 aa).

Residues 1–56 enclose the TRAM domain; it reads MSIDSLDMEARGVGRLLNEDGTPGKVIFVEGALPGETVSYRSFRRKPSYEQAHLVE. Residues cysteine 69, cysteine 75, cysteine 78, and cysteine 157 each coordinate [4Fe-4S] cluster. S-adenosyl-L-methionine contacts are provided by glutamine 265, phenylalanine 294, asparagine 299, glutamate 315, asparagine 343, and aspartate 364. Catalysis depends on cysteine 397, which acts as the Nucleophile.

It belongs to the class I-like SAM-binding methyltransferase superfamily. RNA M5U methyltransferase family. RlmD subfamily.

It carries out the reaction uridine(1939) in 23S rRNA + S-adenosyl-L-methionine = 5-methyluridine(1939) in 23S rRNA + S-adenosyl-L-homocysteine + H(+). In terms of biological role, catalyzes the formation of 5-methyl-uridine at position 1939 (m5U1939) in 23S rRNA. This is 23S rRNA (uracil(1939)-C(5))-methyltransferase RlmD from Cupriavidus necator (strain ATCC 17699 / DSM 428 / KCTC 22496 / NCIMB 10442 / H16 / Stanier 337) (Ralstonia eutropha).